The primary structure comprises 254 residues: MTLLQPFSALLLCLSLMMATSLLTTDKPEEKMYSCPIIQCSAPAVNGLPGRDGRDGPKGEKGDPGEGLRGLQGLPGKAGPQGLKGEVGPQGEKGQKGERGIAVTDDLHRQITDLEAKIRVLEDDLSRYKKALSLKDFVNVGKKMFVSTGKKYNFEKGKSLCAKAGSVLASPRNEAENTALKDLIDPSSQAYIGISDAQTEGRFMYLSGGPLTYSNWKPGEPNNHKNEDCAVIEDSGKWNDLDCSNSNIFIICEL.

A signal peptide spans 1 to 19; that stretch reads MTLLQPFSALLLCLSLMMA. The tract at residues 46–99 is disordered; the sequence is NGLPGRDGRDGPKGEKGDPGEGLRGLQGLPGKAGPQGLKGEVGPQGEKGQKGER. Residues 51-66 are compositionally biased toward basic and acidic residues; sequence RDGRDGPKGEKGDPGE. A 4-hydroxyproline modification is found at Pro57. A 5-hydroxylysine mark is found at Lys58 and Lys61. Residues Lys58 and Lys61 are each glycosylated (O-linked (Gal...) hydroxylysine). Residue Pro75 is modified to 4-hydroxyproline. Residues Lys93 and Lys96 each carry the 5-hydroxylysine modification. The C-type lectin domain occupies 140 to 250; sequence VGKKMFVSTG…LDCSNSNIFI (111 aa). Intrachain disulfides connect Cys161–Cys252 and Cys229–Cys243.

Oligomeric complex of 3 or more homotrimers.

It is found in the secreted. Its function is as follows. Calcium-dependent lectin involved in innate immune defense. Binds mannose, fucose and N-acetylglucosamine on different microorganisms and activates the lectin complement pathway. The polypeptide is Mannose-binding protein (Gallus gallus (Chicken)).